The primary structure comprises 553 residues: Membrane protein insertase YidC (553 aa).

The chain crosses the membrane as a helical span at residues 3–23 (IKRTILWVIFSLSVVLLFDNW). The disordered stretch occupies residues 44 to 64 (AAAPGGTPAGDVPKAAAPAAA). A run of 4 helical transmembrane segments spans residues 359–379 (LLGN…LVFF), 429–449 (LGGC…YWVL), 467–487 (LASP…MFVQ), and 507–527 (PIAF…YWVV).

This sequence belongs to the OXA1/ALB3/YidC family. Type 1 subfamily. In terms of assembly, interacts with the Sec translocase complex via SecD. Specifically interacts with transmembrane segments of nascent integral membrane proteins during membrane integration.

The protein localises to the cell inner membrane. In terms of biological role, required for the insertion and/or proper folding and/or complex formation of integral membrane proteins into the membrane. Involved in integration of membrane proteins that insert both dependently and independently of the Sec translocase complex, as well as at least some lipoproteins. Aids folding of multispanning membrane proteins. This is Membrane protein insertase YidC from Ralstonia nicotianae (strain ATCC BAA-1114 / GMI1000) (Ralstonia solanacearum).